We begin with the raw amino-acid sequence, 248 residues long: 3-deoxy-manno-octulosonate cytidylyltransferase (248 aa).

It belongs to the KdsB family.

It localises to the cytoplasm. It carries out the reaction 3-deoxy-alpha-D-manno-oct-2-ulosonate + CTP = CMP-3-deoxy-beta-D-manno-octulosonate + diphosphate. It functions in the pathway nucleotide-sugar biosynthesis; CMP-3-deoxy-D-manno-octulosonate biosynthesis; CMP-3-deoxy-D-manno-octulosonate from 3-deoxy-D-manno-octulosonate and CTP: step 1/1. Its pathway is bacterial outer membrane biogenesis; lipopolysaccharide biosynthesis. Its function is as follows. Activates KDO (a required 8-carbon sugar) for incorporation into bacterial lipopolysaccharide in Gram-negative bacteria. In Salmonella paratyphi A (strain ATCC 9150 / SARB42), this protein is 3-deoxy-manno-octulosonate cytidylyltransferase.